The primary structure comprises 210 residues: Prolactin (210 aa).

Residues 1-23 form the signal peptide; sequence MARRSQGTKLHLAVLCLVVSCHA. 2 disulfide bridges follow: Cys-69-Cys-183 and Cys-200-Cys-210.

Belongs to the somatotropin/prolactin family.

The protein localises to the secreted. The sequence is that of Prolactin (prl) from Oncorhynchus mykiss (Rainbow trout).